Consider the following 920-residue polypeptide: MPGRAGVARFCLLALALQLHWPLAACEPGWTTRGSQEGSPPLQHELIIPQWRTSESPGRGKHPLRAELRVMAEGRELILDLEKNEHLFAPAYTETCYTASGNPQTSTLKSEDHCFYHGTVRDVDESSVTLSTCRGIRGLIIVRSNLSYIIEPVPNSDSQHRIYRSEHLTLPPGNCGFEHSGPTSKDWALQFTHQTKKQPRRMKREDLHSMKYVELYLVADYAEFQKNRHDQDATKRKLMEIANYVDKFYRSLNIRIALVGLEVWTHGDKCEVSENPYSTLWSFLSWRRKLLAQKSHDNAQLITGRSFQGTTIGLAPLMAMCSVYQSGGVSMDHSENAIGVASTVAHEIGHNFGMSHDSAHCCSASAADGGCIMAAATGHPFPKVFSWCNRKELDRYLQTGGGMCLSNMPDTRTLYGGRRCGNGYLEDGEECDCGEEEECKNPCCNASNCTLKEGAECAHGSCCHQCKLVAPGTQCREQVRQCDLPEFCTGKSPHCPTNYYQMDGTPCEGGQAYCYNGMCLTYQEQCQQLWGPGARPALDLCFERVNAAGDTYGNCGKGLNGQYRKCSPRDAKCGKIQCQSTQARPLESNAVSIDTTITLNGRRIHCRGTHVYRGPEEEEGEGDMLDPGLVMTGTKCGHNHICFEGQCRNTSFFETEGCGKKCNGHGVCNNNKNCHCFPGWSPPFCNTPGDGGSVDSGPLPPKSVGPVIAGVFSALFVLAVLVLLCHCYRQSHKLGKPSALPFKLRHQFSCPFRVSQSGGTGHANPTFKLQTPQGKRKVTNTPESLRKPSHPPPRPPPDYLRVESPPAPLPAHLNRAAGSSPEAGARIERKESARRPPPSRPMPPAPNCLLSQDFSRPRPPQKALPANPVPGQRTGPRSGGTSLLQPPTSGPQPPRPPAVPVPKLPEYRSQRVGAIISSKI.

An N-terminal signal peptide occupies residues 1 to 26 (MPGRAGVARFCLLALALQLHWPLAAC). Positions 27-204 (EPGWTTRGSQ…TKKQPRRMKR (178 aa)) are excised as a propeptide. At 27-703 (EPGWTTRGSQ…VDSGPLPPKS (677 aa)) the chain is on the extracellular side. The Cysteine switch signature appears at 131–138 (STCRGIRG). Cysteine 133 contacts Zn(2+). Asparagine 145 carries N-linked (GlcNAc...) asparagine glycosylation. The region spanning 211 to 409 (KYVELYLVAD…GGGMCLSNMP (199 aa)) is the Peptidase M12B domain. 3 cysteine pairs are disulfide-bonded: cysteine 321–cysteine 404, cysteine 361–cysteine 388, and cysteine 362–cysteine 371. Residue histidine 346 participates in Zn(2+) binding. Glutamate 347 is a catalytic residue. Residues histidine 350 and histidine 356 each contribute to the Zn(2+) site. The 87-residue stretch at 417-503 (GRRCGNGYLE…HCPTNYYQMD (87 aa)) folds into the Disintegrin domain. Asparagine 445 and asparagine 448 each carry an N-linked (GlcNAc...) asparagine glycan. Cysteine 475 and cysteine 495 are joined by a disulfide. Asparagine 649 carries an N-linked (GlcNAc...) asparagine glycan. One can recognise an EGF-like domain in the interval 654-686 (ETEGCGKKCNGHGVCNNNKNCHCFPGWSPPFCN). 3 cysteine pairs are disulfide-bonded: cysteine 658–cysteine 668, cysteine 662–cysteine 674, and cysteine 676–cysteine 685. The helical transmembrane segment at 704 to 724 (VGPVIAGVFSALFVLAVLVLL) threads the bilayer. Residues 725–920 (CHCYRQSHKL…RVGAIISSKI (196 aa)) are Cytoplasmic-facing. A disordered region spans residues 755–920 (SQSGGTGHAN…RVGAIISSKI (166 aa)). Residues 767–783 (FKLQTPQGKRKVTNTPE) are compositionally biased toward polar residues. Positions 825–834 (ARIERKESAR) are enriched in basic and acidic residues. The SH3-binding signature appears at 835–846 (RPPPSRPMPPAP). 2 stretches are compositionally biased toward pro residues: residues 835–846 (RPPPSRPMPPAP) and 888–903 (TSGP…PVPK).

Interacts with SH3PXD2A. Zn(2+) serves as cofactor. In terms of processing, the precursor is cleaved by a furin endopeptidase. Widely expressed, with the highest expression in bone, heart and lung, followed by brain and spleen and relatively low expression in liver, skeletal muscle, kidney and testis. In bone, primarily expressed in cell of the osteoblast lineage and not detected in mature osteoclasts.

It localises to the membrane. In terms of biological role, participates in the proteolytic processing of beta-type neuregulin isoforms which are involved in neurogenesis and synaptogenesis, suggesting a regulatory role in glial cell. Also cleaves alpha-2 macroglobulin. May be involved in osteoblast differentiation and/or osteoblast activity in bone. This Mus musculus (Mouse) protein is Disintegrin and metalloproteinase domain-containing protein 19 (Adam19).